We begin with the raw amino-acid sequence, 337 residues long: Ribosomal RNA small subunit methyltransferase H (337 aa).

S-adenosyl-L-methionine contacts are provided by residues 36–38, Asp56, Phe82, Asp100, and Gln107; that span reads GGH. Residues 314 to 337 form a disordered region; the sequence is GLERRSGRIPNPRSPIPASQGDAR.

This sequence belongs to the methyltransferase superfamily. RsmH family.

It is found in the cytoplasm. It catalyses the reaction cytidine(1402) in 16S rRNA + S-adenosyl-L-methionine = N(4)-methylcytidine(1402) in 16S rRNA + S-adenosyl-L-homocysteine + H(+). Specifically methylates the N4 position of cytidine in position 1402 (C1402) of 16S rRNA. The polypeptide is Ribosomal RNA small subunit methyltransferase H (Xanthomonas oryzae pv. oryzae (strain PXO99A)).